The following is a 237-amino-acid chain: Chalcone--flavanone isomerase (237 aa).

2 residues coordinate substrate: threonine 50 and serine 192.

It belongs to the chalcone isomerase family.

It carries out the reaction a chalcone = a flavanone.. It functions in the pathway secondary metabolite biosynthesis; flavonoid biosynthesis. Its function is as follows. Catalyzes the intramolecular cyclization of bicyclic chalcones into tricyclic (S)-flavanones. Responsible for the isomerization of 4,2',4',6'-tetrahydroxychalcone (also termed chalcone) into naringenin. In Callistephus chinensis (China aster), this protein is Chalcone--flavanone isomerase (CHI).